Here is a 204-residue protein sequence, read N- to C-terminus: Thymidylate kinase (204 aa).

An ATP-binding site is contributed by 11-18 (GLDKSGKT).

This sequence belongs to the thymidylate kinase family.

It carries out the reaction dTMP + ATP = dTDP + ADP. Its pathway is pyrimidine metabolism; dTTP biosynthesis. The polypeptide is Thymidylate kinase (TMK) (Bos taurus (Bovine)).